Consider the following 1641-residue polypeptide: Maestro heat-like repeat-containing protein family member 1 (1641 aa).

7 HEAT repeats span residues 3–41, 159–198, 344–382, 385–423, 1048–1086, 1358–1396, and 1605–1641; these read ESSM…ARPV, VPFL…GALE, CSSP…SAAA, EDKK…HGYL, PDQL…ERGG, LMLL…GCPD, and QVDL…VKLA.

This sequence belongs to the MROH1 family. In terms of assembly, homooligomer; homooligomerizes at lysosome scission sites.

It is found in the lysosome membrane. Functionally, lysosome fission factor. Recruited to lysosomes by RAB7 (RAB7A or RAB7B) at scission sites and homooligomerizes to mediate the constriction and scission of lysosomal tubules. May sever membranes by inserting amphipathic helices into one bilayer leaflet. Lysosome fission is required to maintain their steady-state number, shape, size, composition and function, and to accomplish regeneration. The polypeptide is Maestro heat-like repeat-containing protein family member 1 (Homo sapiens (Human)).